The following is a 229-amino-acid chain: B-cell antigen receptor complex-associated protein beta chain (229 aa).

The signal sequence occupies residues methionine 1–alanine 28. Over alanine 29 to aspartate 159 the chain is Extracellular. The 101-residue stretch at proline 38 to threonine 138 folds into the Ig-like V-type domain. 2 disulfide bridges follow: cysteine 43–cysteine 126 and cysteine 65–cysteine 122. 4 N-linked (GlcNAc...) asparagine glycosylation sites follow: asparagine 73, asparagine 101, asparagine 127, and asparagine 128. A helical transmembrane segment spans residues glycine 160–leucine 180. Topologically, residues leucine 181–glutamate 229 are cytoplasmic. The ITAM domain maps to aspartate 185 to leucine 213. Phosphotyrosine; by SRC-type Tyr-kinases is present on residues tyrosine 196 and tyrosine 207.

In terms of assembly, heterodimer of alpha and beta chains; disulfide-linked. Part of the B-cell antigen receptor complex where the alpha/beta chain heterodimer is non-covalently associated with an antigen-specific membrane-bound surface immunoglobulin of two heavy chains and two light chains. Interacts with LYN. Post-translationally, phosphorylated on tyrosine upon B-cell activation by SRC-type Tyr-kinases such as BLK, LYN and SYK. In terms of tissue distribution, B-cells.

It is found in the cell membrane. Its function is as follows. Required in cooperation with CD79A for initiation of the signal transduction cascade activated by the B-cell antigen receptor complex (BCR) which leads to internalization of the complex, trafficking to late endosomes and antigen presentation. Enhances phosphorylation of CD79A, possibly by recruiting kinases which phosphorylate CD79A or by recruiting proteins which bind to CD79A and protect it from dephosphorylation. The protein is B-cell antigen receptor complex-associated protein beta chain (CD79B) of Homo sapiens (Human).